The following is a 375-amino-acid chain: CLIP domain-containing serine protease B14 (375 aa).

A signal peptide spans 1-24 (MYSRRYVACGLLCLLVIAIDQGHG). Residues 29–83 (PCTTPNGTAGRCVRVRECGYVLDLLRKDLFAHSDTVHLEGLQCGTRPDGGALVCC) enclose the Clip domain. 3 disulfide bridges follow: Cys-30/Cys-82, Cys-40/Cys-71, and Cys-46/Cys-83. Residue Asn-34 is glycosylated (N-linked (GlcNAc...) asparagine). Positions 101 to 370 (IIGGNDTELG…YMGWLEREMF (270 aa)) constitute a Peptidase S1 domain. An N-linked (GlcNAc...) asparagine glycan is attached at Asn-105. The cysteines at positions 131 and 147 are disulfide-linked. Catalysis depends on charge relay system residues His-146 and Asp-213. N-linked (GlcNAc...) asparagine glycosylation is present at Asn-238. Cystine bridges form between Cys-289-Cys-307 and Cys-317-Cys-346. The Charge relay system role is filled by Ser-321. N-linked (GlcNAc...) asparagine glycosylation occurs at Asn-357.

Belongs to the peptidase S1 family. CLIP subfamily. In terms of processing, N-glycosylated. Post-translationally, proteolytically cleaved. Expressed by a subpopulation of hemocytes.

It is found in the secreted. Its function is as follows. Serine protease. Plays a role in innate immunity against infections by parasite P.berghei and by Gram-negative bacteria such as E.coli. In response to P.berghei infection, contributes to the clearing of parasite ookinetes independent of melanization, an innate immune response which consists in the deposition of melanin pigments on invading pathogens and parasites. May play a role in non-septic wound healing. The chain is CLIP domain-containing serine protease B14 from Anopheles gambiae (African malaria mosquito).